The sequence spans 229 residues: Matrix protein (229 aa).

A compositionally biased stretch (low complexity) spans 1–10; it reads MSSLKKILGL. Positions 1–23 are disordered; that stretch reads MSSLKKILGLKGKGKKSKKLGIA. Positions 2-4 match the dynamin binding motif; the sequence is SSL. The PPXY motif motif lies at 24–27; the sequence is PPPY. Positions 37–40 match the PTAP/PSAP motif motif; it reads PSAP.

Belongs to the vesiculoviruses matrix protein family. In terms of assembly, homomultimer. Interacts with viral nucleocapsid; this interaction contributes to the virion assembly. Interacts with the viral envelope glycoprotein; this interaction contributes to the virion assembly. Interacts with host RAE1-NUP98 complex. Interacts with host NEDD4 and TSG101. Interacts with host dynamin. Interacts with host NDUFAF4; the interaction inhibits viral propagation and is independent of interferon activation. Interacts with host GTF2H5; the interaction may inhibit host transcription. Phosphorylated by host.

It is found in the virion. The protein resides in the host endomembrane system. Its subcellular location is the host nucleus membrane. It localises to the host nucleus. The protein localises to the host cytoplasm. Its function is as follows. Forms a double layer around the helical nucleocapsid, the inner matrix layer binding to the N helix and the outer matrix layer binding to the envelope glycoprotein. Plays a major role in assembly and budding of virion, by recruiting cellular partners of the ESCRT complexes that play a key role in releasing the budding particle from the host membrane. Condensates the ribonucleocapsid core during virus assembly. Inhibits the host mRNA nuclear export thereby inducing the shut off of cellular transcription and preventing the interferon signaling and the establishment of antiviral state in infected cells. This shutoff presumably inhibits interferon signaling and thus establishment of antiviral state in virus infected cells. Induces cell-rounding, cytoskeleton disorganization and apoptosis in infected cell. Inhibits host transcription, possibly through interaction with host DNA repair factor IIH/TFIIH GTF2H5 subunit. The chain is Matrix protein (M) from Vesicular stomatitis Indiana virus (strain San Juan) (VSIV).